Here is a 431-residue protein sequence, read N- to C-terminus: E3 ubiquitin-protein ligase marc-3 (431 aa).

The segment at 5-74 (NASLGPAVCR…EICKFAFKIK (70 aa)) adopts an RING-CH-type zinc-finger fold. Cys-13, Cys-16, Cys-38, Cys-40, His-48, Cys-51, Cys-64, and Cys-67 together coordinate Zn(2+). 2 helical membrane-spanning segments follow: residues 98-118 (PFIDFAFVLLILPFAFFGVFM) and 157-177 (LFLFVALLLFSAFITLVVSAL). Disordered stretches follow at residues 267–289 (TSPDSNNTHHHDESRNEIPFGRR) and 327–349 (SRATSTRRESGISPESSSRRDMR). A compositionally biased stretch (basic and acidic residues) spans 273-282 (NTHHHDESRN).

It localises to the cell membrane. The protein resides in the endosome membrane. The catalysed reaction is S-ubiquitinyl-[E2 ubiquitin-conjugating enzyme]-L-cysteine + [acceptor protein]-L-lysine = [E2 ubiquitin-conjugating enzyme]-L-cysteine + N(6)-ubiquitinyl-[acceptor protein]-L-lysine.. The protein operates within protein modification; protein ubiquitination. Its function is as follows. E3 ubiquitin-protein ligase which positively regulates the fast polyspermy block during fertilization, preventing entry of more than one sperm into the oocyte. After fertilization, required in the zygote for the selective degradation of a subset of maternal membrane proteins including cav-1, chs-1 and rme-2, probably by mediating their K63-linked polyubiquitination. The chain is E3 ubiquitin-protein ligase marc-3 from Caenorhabditis elegans.